A 353-amino-acid chain; its full sequence is Small ribosomal subunit biogenesis GTPase RsgA (353 aa).

A disordered region spans residues 1-24 (MSKNKLSKGQQRRVKANHQRRLKT). Basic residues predominate over residues 10 to 23 (QQRRVKANHQRRLK). A CP-type G domain is found at 104–274 (ASVLTRPDFY…VIDSPGVREF (171 aa)). GTP-binding positions include 160–163 (NKID) and 214–222 (GQSGVGKSS). Zn(2+)-binding residues include Cys-298, Cys-303, His-305, and Cys-311.

Belongs to the TRAFAC class YlqF/YawG GTPase family. RsgA subfamily. In terms of assembly, monomer. Associates with 30S ribosomal subunit, binds 16S rRNA. It depends on Zn(2+) as a cofactor.

It localises to the cytoplasm. In terms of biological role, one of several proteins that assist in the late maturation steps of the functional core of the 30S ribosomal subunit. Helps release RbfA from mature subunits. May play a role in the assembly of ribosomal proteins into the subunit. Circularly permuted GTPase that catalyzes slow GTP hydrolysis, GTPase activity is stimulated by the 30S ribosomal subunit. The chain is Small ribosomal subunit biogenesis GTPase RsgA from Klebsiella pneumoniae subsp. pneumoniae (strain ATCC 700721 / MGH 78578).